A 355-amino-acid polypeptide reads, in one-letter code: Anthranilate phosphoribosyltransferase (355 aa).

Residues glycine 99, glycine 102 to aspartate 103, threonine 107, asparagine 109 to threonine 112, lysine 127 to serine 135, and serine 139 each bind 5-phospho-alpha-D-ribose 1-diphosphate. Glycine 99 serves as a coordination point for anthranilate. Residue serine 111 coordinates Mg(2+). Asparagine 130 contacts anthranilate. Arginine 185 serves as a coordination point for anthranilate. Aspartate 243 and glutamate 244 together coordinate Mg(2+).

Belongs to the anthranilate phosphoribosyltransferase family. In terms of assembly, homodimer. The cofactor is Mg(2+).

It carries out the reaction N-(5-phospho-beta-D-ribosyl)anthranilate + diphosphate = 5-phospho-alpha-D-ribose 1-diphosphate + anthranilate. It functions in the pathway amino-acid biosynthesis; L-tryptophan biosynthesis; L-tryptophan from chorismate: step 2/5. Catalyzes the transfer of the phosphoribosyl group of 5-phosphorylribose-1-pyrophosphate (PRPP) to anthranilate to yield N-(5'-phosphoribosyl)-anthranilate (PRA). This is Anthranilate phosphoribosyltransferase from Pseudoalteromonas translucida (strain TAC 125).